The following is a 112-amino-acid chain: UPF0342 protein SP_1372 (112 aa).

Belongs to the UPF0342 family.

The sequence is that of UPF0342 protein SP_1372 from Streptococcus pneumoniae serotype 4 (strain ATCC BAA-334 / TIGR4).